The sequence spans 318 residues: Protein OPG137 (318 aa).

Positions 145–172 form a coiled coil; that stretch reads VYDKDKRIQMLEDEVVNLRNQRSNTKSS.

It belongs to the orthopoxvirus OPG137 family. In terms of assembly, homomultimer. Interacts with OPG160. In terms of processing, phosphorylated by a OPG054-independent mechanism.

It is found in the host cytoplasm. In terms of biological role, required for viral crescent formation early during virus morphogenesis. In Vaccinia virus (strain Ankara) (VACV), this protein is Protein OPG137 (OPG137).